The primary structure comprises 635 residues: S-type anion channel SLAH3 (635 aa).

Residues 1 to 253 (MEEKPNYVIQ…IVLPNDKKWP (253 aa)) are Cytoplasmic-facing. Residues 102-121 (SDPTTSLSSENHKNSGSTGK) are compositionally biased toward polar residues. Residues 102 to 173 (SDPTTSLSSE…SGHHQNQNQA (72 aa)) form a disordered region. Over residues 153-165 (NHHHHLHRQHQSG) the composition is skewed to basic residues. Ser189 carries the post-translational modification Phosphoserine. The disordered stretch occupies residues 193 to 217 (ERQFTRKPASVEPEAPNRNNQNLNT). The helical transmembrane segment at 254-276 (FLLRYPISTFGMCLGVSSQAIMW) threads the bilayer. Residues 277-299 (KTLATAEPTKFLHVPLWINQGLW) lie on the Extracellular side of the membrane. Residues 300-320 (FISVALILTIATIYLLKIILF) form a helical membrane-spanning segment. Residues 321 to 335 (FEAVRREYYHPIRIN) lie on the Cytoplasmic side of the membrane. A helical transmembrane segment spans residues 336-356 (FFFAPFISLLFLALGVPPSII). Over 357–358 (TD) the chain is Extracellular. Residues 359 to 379 (LPHFLWYLLMFPFICLELKIY) form a helical membrane-spanning segment. Over 380 to 396 (GQWMSGGQRRLSRVANP) the chain is Cytoplasmic. A helical membrane pass occupies residues 397–417 (TNHLSVVGNFVGALLGASMGL). The Extracellular portion of the chain corresponds to 418 to 419 (RE). A helical membrane pass occupies residues 420–440 (GPIFFYAVGMAHYLVLFVTLY). Residues 441-455 (QRLPTNETLPKDLHP) lie on the Cytoplasmic side of the membrane. A helical transmembrane segment spans residues 456–476 (VFFLFVAAPSVASMAWAKVTG). Ser477 is a topological domain (extracellular). The helical transmembrane segment at 478–498 (FDYGSKVCYFIAIFLYFSLAV) threads the bilayer. The Cytoplasmic segment spans residues 499 to 504 (RINFFR). Residues 505-525 (GIKFSLSWWAYTFPMTGAAIA) form a helical membrane-spanning segment. Topologically, residues 526-541 (TIRYATVVKSTMTQIM) are extracellular. A helical transmembrane segment spans residues 542-562 (CVVLCAIATLVVFALLVTTII). The Cytoplasmic portion of the chain corresponds to 563–635 (HAFVLRDLFP…NGKTQESDSS (73 aa)). Residues 611–635 (FTDSDSSQSNDVEACNGKTQESDSS) form a disordered region. Polar residues predominate over residues 614–635 (SDSSQSNDVEACNGKTQESDSS).

Belongs to the SLAC1 S-type anion channel family. In terms of assembly, homotrimer. Interacts with KAT1. As to expression, expressed in the whole plant, escpecially in vascular systems.

It is found in the cell membrane. Slow, weak voltage-dependent S-type anion efflux channel involved in maintenance of anion homeostasis. Binds to the highly selective inward-rectifying potassium channel KAT1 and inhibits its activity. Functions as an essential negative regulator of inward potassium channels in guard cells. Essential for the efficient stomatal closure and opening in guard cells. The protein is S-type anion channel SLAH3 (SLAH3) of Arabidopsis thaliana (Mouse-ear cress).